We begin with the raw amino-acid sequence, 435 residues long: S-locus-specific glycoprotein BS29-2 (435 aa).

An N-terminal signal peptide occupies residues Met-1–Ser-30. A Bulb-type lectin domain is found at Thr-33–Trp-155. N-linked (GlcNAc...) asparagine glycans are attached at residues Asn-113, Asn-120, Asn-244, Asn-260, and Asn-389. The PAN domain occupies Cys-350–Ala-430. Cystine bridges form between Cys-380–Cys-405 and Cys-388–Cys-390.

As to expression, stigma.

Functionally, involved in sporophytic self-incompatibility system (the inability of flowering plants to achieve self-fertilization). The chain is S-locus-specific glycoprotein BS29-2 (SLSG) from Brassica oleracea var. alboglabra (Chinese kale).